The chain runs to 249 residues: Phosphonates import ATP-binding protein PhnC (249 aa).

Residues 2 to 246 (IEFKKVEKVW…KLNESKLEEI (245 aa)) enclose the ABC transporter domain. 35–42 (GLSGAGKT) provides a ligand contact to ATP.

This sequence belongs to the ABC transporter superfamily. Phosphonates importer (TC 3.A.1.9.1) family. The complex is composed of two ATP-binding proteins (PhnC), two transmembrane proteins (PhnE) and a solute-binding protein (PhnD).

It localises to the cell membrane. It catalyses the reaction phosphonate(out) + ATP + H2O = phosphonate(in) + ADP + phosphate + H(+). Its function is as follows. Part of the ABC transporter complex PhnCDE involved in phosphonates import. Responsible for energy coupling to the transport system. The chain is Phosphonates import ATP-binding protein PhnC from Mesoplasma florum (strain ATCC 33453 / NBRC 100688 / NCTC 11704 / L1) (Acholeplasma florum).